The sequence spans 452 residues: tRNA pseudouridine synthase Pus10 (452 aa).

The region spanning 71–200 (EMLRALAPSC…DGHVEIQIQP (130 aa)) is the THUMP domain. Residue Asp-269 is the Nucleophile of the active site. Residues Tyr-335 and Tyr-406 each coordinate substrate.

The protein belongs to the pseudouridine synthase Pus10 family.

The enzyme catalyses uridine(54) in tRNA = pseudouridine(54) in tRNA. The catalysed reaction is uridine(55) in tRNA = pseudouridine(55) in tRNA. Functionally, responsible for synthesis of pseudouridine from uracil-54 and uracil-55 in the psi GC loop of transfer RNAs. This chain is tRNA pseudouridine synthase Pus10, found in Methanothrix thermoacetophila (strain DSM 6194 / JCM 14653 / NBRC 101360 / PT) (Methanosaeta thermophila).